Here is a 1036-residue protein sequence, read N- to C-terminus: Potassium-transporting ATPase alpha chain 2 (1036 aa).

The tract at residues 1–50 is disordered; sequence MRRKTEIYSVELNGTKDVKPADQRDDKKFKGAKNKDLEPNKSHEKEELKK. Topologically, residues 1–99 are cytoplasmic; sequence MRRKTEIYSV…PNTLTPPKQT (99 aa). Residues 14–50 are compositionally biased toward basic and acidic residues; sequence GTKDVKPADQRDDKKFKGAKNKDLEPNKSHEKEELKK. A helical transmembrane segment spans residues 100–120; the sequence is PEIIKFLKQMVGGFSILLWIG. Residues 121–143 lie on the Lumenal side of the membrane; that stretch reads AALCWIAFVIQYVNNSASLDNVY. The chain crosses the membrane as a helical span at residues 144–164; the sequence is LGAILVLVVILTGIFAYYQEA. Over 165–300 the chain is Cytoplasmic; that stretch reads KSTNIMASFS…SEKTPIAIEI (136 aa). Residues 301–320 form a helical membrane-spanning segment; it reads EHFVHIVAGVAVSIDIIFFI. The Lumenal portion of the chain corresponds to 321 to 332; that stretch reads TAVCMKYYVLDA. A helical transmembrane segment spans residues 333-350; that stretch reads IIFLISIIVANVPEGLLA. Residues 351 to 784 lie on the Cytoplasmic side of the membrane; that stretch reads TVTVTLSLTA…EEGRLIFDNL (434 aa). Residue Asp388 is the 4-aspartylphosphate intermediate of the active site. Mg(2+)-binding residues include Asp729 and Asp733. A helical transmembrane segment spans residues 785–804; it reads KKTIAYTLTKNIAELCPFLI. Residues 805 to 814 lie on the Lumenal side of the membrane; the sequence is YIVAGLPLPI. The chain crosses the membrane as a helical span at residues 815–835; sequence GTITILFIDLGTDIIPSIALA. Topologically, residues 836-855 are cytoplasmic; sequence YEKAESDIMNRKPRHKKKDR. The helical transmembrane segment at 856-878 threads the bilayer; the sequence is LVNTQLAIYSYLHIGLMQALGGF. Over 879 to 930 the chain is Lumenal; the sequence is LVYFTVYAQQGFWPTSLINLRVAWETDDINDLEDSYGQEWTRYQRKYLEWTG. Residues 931 to 950 traverse the membrane as a helical segment; that stretch reads STAFFVAIMIQQIADLIIRK. The Cytoplasmic portion of the chain corresponds to 951–964; that stretch reads TRRNSIFQQGLFRN. Position 955 is a phosphoserine; by PKA (Ser955). The helical transmembrane segment at 965-983 threads the bilayer; that stretch reads KVIWVGIASQVIVALILSY. The Lumenal segment spans residues 984–998; that stretch reads GLGSVPALSFTMLRV. The helical transmembrane segment at 999 to 1019 threads the bilayer; that stretch reads QYWFVAVPHAILIWVYDEMRK. At 1020 to 1036 the chain is on the cytoplasmic side; the sequence is LFIRLYPGSWWDKNMYY.

This sequence belongs to the cation transport ATPase (P-type) (TC 3.A.3) family. Type IIC subfamily. In terms of assembly, the ATPase pump is composed of a catalytic alpha subunit and an auxiliary non-catalytic beta subunit. The alpha subunit pairs with the beta subunit of gastric H(+)/K(+) ATPase ATP4B or the beta subunit of Na(+)/K(+) ATPases ATP1B1 and ATP1B3; this interaction is required for the formation of a functionally active pump and its targeting at the plasma membrane. Expressed at high levels in distal colon, coagulating and preputial glands; at much lower levels in proximal colon, kidney, uterus, brain, placenta and lung; and at trace levels in heart and forestomach. Expressed in distal colon epithelium (at protein level). Expressed in anterior prostate (at protein level).

It is found in the apical cell membrane. The enzyme catalyses K(+)(out) + ATP + H2O + H(+)(in) = K(+)(in) + ADP + phosphate + 2 H(+)(out). It catalyses the reaction K(+)(out) + Na(+)(in) + ATP + H2O = K(+)(in) + Na(+)(out) + ADP + phosphate + H(+). With respect to regulation, up-regulated by K(+) ions in a dose-dependent way. The catalytic subunit of a H(+)/K(+) ATPase and/or Na(+)/K(+) ATPase pump which transports K(+) ions in exchange for Na(+) and/or H(+) ions across the apical membrane of epithelial cells. Uses ATP as an energy source to pump K(+) ions into the cell while transporting Na(+) and/or H(+) ions to the extracellular compartment. Involved in the maintenance of electrolyte homeostasis through K(+) ion absorption in kidney and colon. In the airway epithelium, may play a primary role in mucus acidification regulating its viscosity and clearance. The chain is Potassium-transporting ATPase alpha chain 2 (Atp12a) from Rattus norvegicus (Rat).